A 385-amino-acid polypeptide reads, in one-letter code: Glucose-fructose oxidoreductase domain-containing protein 2 (385 aa).

A signal peptide spans 1-25 (MKMLPGVGVFGTGSSARVLVPLLRA).

It belongs to the Gfo/Idh/MocA family.

It is found in the secreted. Its subcellular location is the extracellular space. The protein localises to the extracellular matrix. Its function is as follows. Promotes matrix assembly. This chain is Glucose-fructose oxidoreductase domain-containing protein 2 (GFOD2), found in Homo sapiens (Human).